Here is an 87-residue protein sequence, read N- to C-terminus: Sodium channel neurotoxin MeuNaTxalpha-5* (87 aa).

An N-terminal signal peptide occupies residues 1–19 (MNYLILISFALLVITGVES). Residues 21-85 (RDAYIAKPHN…VPIRIPGKCH (65 aa)) enclose the LCN-type CS-alpha/beta domain. Cystine bridges form between Cys-31–Cys-84, Cys-35–Cys-57, Cys-43–Cys-67, and Cys-47–Cys-69. Positions 86–87 (RR) are cleaved as a propeptide — removed by a carboxypeptidase.

Belongs to the long (4 C-C) scorpion toxin superfamily. Sodium channel inhibitor family. Alpha subfamily. As to expression, expressed by the venom gland.

The protein localises to the secreted. In terms of biological role, alpha toxins bind voltage-independently at site-3 of sodium channels (Nav) and inhibit the inactivation of the activated channels, thereby blocking neuronal transmission. This toxin inhibits inactivation of Nav1.6/SCN8A (EC(50)=790 nM) and drosophila DmNav1 (EC(50)=280 nM). The toxin (1 uM) does not significantly shift the midpoint of activation at the two channels, but induces a significant depolarizing shift in the V(1/2) of inactivation of the channels. Has antimicrobial activity. The sequence is that of Sodium channel neurotoxin MeuNaTxalpha-5* from Mesobuthus eupeus (Lesser Asian scorpion).